The sequence spans 294 residues: Protoheme IX farnesyltransferase (294 aa).

Transmembrane regions (helical) follow at residues 24-44 (VVLL…PGWV), 48-68 (LIAF…AINH), 96-116 (ALWF…LFVN), 118-138 (LTAL…TGYL), 146-166 (IVIG…AVTG), 172-192 (ALLL…ALAI), 224-244 (VLLL…WIYL), 245-265 (LGAL…YFTD), and 268-288 (VVAM…FVFL).

Belongs to the UbiA prenyltransferase family. Protoheme IX farnesyltransferase subfamily.

It localises to the cell inner membrane. It catalyses the reaction heme b + (2E,6E)-farnesyl diphosphate + H2O = Fe(II)-heme o + diphosphate. It functions in the pathway porphyrin-containing compound metabolism; heme O biosynthesis; heme O from protoheme: step 1/1. Its function is as follows. Converts heme B (protoheme IX) to heme O by substitution of the vinyl group on carbon 2 of heme B porphyrin ring with a hydroxyethyl farnesyl side group. In Legionella pneumophila (strain Paris), this protein is Protoheme IX farnesyltransferase.